The sequence spans 707 residues: MLNPIVRKFQYGQHTITLETGVIARQANAAVMASMDETAVFVTVVGQKKIHTGQKFFPLTVNYQERTYAAGRIPGGFFRREGRPSENEILTARLIDRPLRPLFPKKFLNEIQIIATVVSVNPQINPDIISIIGASAALSLSGIPFYGPVGAARVGYINNQYILNPISDDMKNSSLDLVVSGTQNAILMVEAESKILSEEKILGAIIFGHQQQQVVINNIRSLSNEASKLPWVISYPETNKTLELKIINSFEKNISDAYVIFNKQDRIEKLNSIKENIIKLFLDENSNIDTLEIEDIFQKIEKKVVRKRILSNQTRIDGREKDMIRALDVRTGILPRTHGSALFTRGETQSLVSVTLGTSRDAQNLDELLGDRIDNFLFHYNFPPYSVGEIGMVGSPKRREIGHGRLAKRSLLAVMPTLENFPYTIRVVSEITESNGSSSMASVCGASLALMDAGVPIKSAVAGISMGLVKEGNQHVLLSDILGDEDHLGDMDFKVAGTEEGITALQMDMKIEGITNEIIHSALNEARLARLHILNVMNQALNESRSEISEFAPRIHIIKINPEKIKDVIGKGGSVIRMLTEETGTIIEIEDDGTVKISSTVKEKAKNAIRRIKEITAEIEVGRIYSGKVTRIVDFGAFVSIGLGKEGLVHISQISDKRVDKVSNHLKIDQIISVKVLEIDRQGRLRLSIKEIDSSILSNKSINNSII.

Mg(2+) contacts are provided by D486 and D492. The 60-residue stretch at 553–612 (PRIHIIKINPEKIKDVIGKGGSVIRMLTEETGTIIEIEDDGTVKISSTVKEKAKNAIRRI) folds into the KH domain. The 69-residue stretch at 622–690 (GRIYSGKVTR…RQGRLRLSIK (69 aa)) folds into the S1 motif domain.

Belongs to the polyribonucleotide nucleotidyltransferase family. As to quaternary structure, component of the RNA degradosome, which is a multiprotein complex involved in RNA processing and mRNA degradation. Requires Mg(2+) as cofactor.

Its subcellular location is the cytoplasm. It carries out the reaction RNA(n+1) + phosphate = RNA(n) + a ribonucleoside 5'-diphosphate. Its function is as follows. Involved in mRNA degradation. Catalyzes the phosphorolysis of single-stranded polyribonucleotides processively in the 3'- to 5'-direction. This is Polyribonucleotide nucleotidyltransferase from Buchnera aphidicola subsp. Acyrthosiphon pisum (strain 5A).